A 566-amino-acid chain; its full sequence is Intracellular exo-alpha-(1-&gt;5)-L-arabinofuranosidase (566 aa).

The segment covering 1-12 (MTTHNSQYSAET) has biased composition (polar residues). The segment at 1–39 (MTTHNSQYSAETTHPDKQESSPAPTAAGTTASNVSTTGN) is disordered. Low complexity predominate over residues 20–32 (SSPAPTAAGTTAS). The alpha-L-arabinofuranose site is built by Glu-69, Asn-114, and Asn-214. Residue Glu-215 is the Proton donor/acceptor of the active site. Alpha-L-arabinofuranose-binding residues include Tyr-286, Glu-340, and Gln-409. Glu-340 serves as the catalytic Nucleophile.

This sequence belongs to the glycosyl hydrolase 51 family. Homohexamer; trimer of dimers.

The protein resides in the cytoplasm. The catalysed reaction is Hydrolysis of terminal non-reducing alpha-L-arabinofuranoside residues in alpha-L-arabinosides.. It participates in glycan metabolism; L-arabinan degradation. With respect to regulation, completely inhibited by Hg(2+) and Cu(2+) ions, whereas 1 mM Zn(2+) inhibited activity by 51%. In terms of biological role, involved in the degradation of arabinan and is a key enzyme in the complete degradation of the plant cell wall. Catalyzes the cleavage of terminal alpha-(1-&gt;5)-arabinofuranosyl bonds in different hemicellulosic homopolysaccharides (branched and debranched arabinans). It is active with sugar beet arabinan and wheat arabinoxylan. It also exhibited activity against alpha-(1-&gt;5)-linked arabinobiose, arabinotriose, arabinotetraose, and arabinopentaose. The chain is Intracellular exo-alpha-(1-&gt;5)-L-arabinofuranosidase (abfB) from Bifidobacterium longum.